The sequence spans 199 residues: MKHHSLIFLTGFSGSGKSTIGPLLANSLGYGFIDLDQEIESKAGKSITKIFAEEGEQTFRNLELETLRQLTGKKELVVSLGGGVLENNDCYRLIRENGTLVYLKSSPRSLARRLCNKTDRPLLKGEHGTRLSREEIELKISTILEKREPRYATADLSVQTDIKRIGSTVEELTRTIIRFVRQAEQARLKQQSDNNREKQ.

14–19 contributes to the ATP binding site; it reads GSGKST. Residue S18 participates in Mg(2+) binding. 3 residues coordinate substrate: D36, R60, and G82. ATP is bound at residue R120. Residue R147 participates in substrate binding.

Belongs to the shikimate kinase family. Monomer. Mg(2+) serves as cofactor.

Its subcellular location is the cytoplasm. The catalysed reaction is shikimate + ATP = 3-phosphoshikimate + ADP + H(+). Its pathway is metabolic intermediate biosynthesis; chorismate biosynthesis; chorismate from D-erythrose 4-phosphate and phosphoenolpyruvate: step 5/7. In terms of biological role, catalyzes the specific phosphorylation of the 3-hydroxyl group of shikimic acid using ATP as a cosubstrate. The polypeptide is Shikimate kinase (Chlorobium limicola (strain DSM 245 / NBRC 103803 / 6330)).